The sequence spans 330 residues: Phytanoyl-CoA hydroxylase-interacting protein (330 aa).

The region spanning Thr-6–Tyr-115 is the Fibronectin type-III domain. Residues Asn-14 and Asn-325 are each glycosylated (N-linked (GlcNAc...) asparagine).

This sequence belongs to the PHYHIP family. Interacts with PHYH and ADGRB1. Highly expressed in the brain.

In terms of biological role, its interaction with PHYH suggests a role in the development of the central system. This Mus musculus (Mouse) protein is Phytanoyl-CoA hydroxylase-interacting protein (Phyhip).